The primary structure comprises 108 residues: uncharacterized protein (108 aa).

This sequence belongs to the baculoviridae 11 kDa protein family.

This is an uncharacterized protein from Orgyia pseudotsugata (Douglas-fir tussock moth).